A 52-amino-acid polypeptide reads, in one-letter code: Insulin (52 aa).

3 disulfide bridges follow: cysteine 7–cysteine 38, cysteine 19–cysteine 51, and cysteine 37–cysteine 42.

The protein belongs to the insulin family. In terms of assembly, heterodimer of a B chain and an A chain linked by two disulfide bonds.

It is found in the secreted. In terms of biological role, insulin decreases blood glucose concentration. It increases cell permeability to monosaccharides, amino acids and fatty acids. It accelerates glycolysis, the pentose phosphate cycle, and glycogen synthesis in liver. The chain is Insulin (ins) from Atractosteus spatula (Alligator gar).